The following is an 81-amino-acid chain: Photosystem I iron-sulfur center (81 aa).

2 4Fe-4S ferredoxin-type domains span residues 2 to 31 (AHSVKIYDTCIGCTQCVRACPTDVLEMIPW) and 39 to 68 (IASAPRTEDCVGCKRCESACPTDFLSVRVY). Residues cysteine 11, cysteine 14, cysteine 17, cysteine 21, cysteine 48, cysteine 51, cysteine 54, and cysteine 58 each contribute to the [4Fe-4S] cluster site.

As to quaternary structure, the eukaryotic PSI reaction center is composed of at least 11 subunits. It depends on [4Fe-4S] cluster as a cofactor.

It is found in the plastid. Its subcellular location is the chloroplast thylakoid membrane. The catalysed reaction is reduced [plastocyanin] + hnu + oxidized [2Fe-2S]-[ferredoxin] = oxidized [plastocyanin] + reduced [2Fe-2S]-[ferredoxin]. In terms of biological role, apoprotein for the two 4Fe-4S centers FA and FB of photosystem I (PSI); essential for photochemical activity. FB is the terminal electron acceptor of PSI, donating electrons to ferredoxin. The C-terminus interacts with PsaA/B/D and helps assemble the protein into the PSI complex. Required for binding of PsaD and PsaE to PSI. PSI is a plastocyanin-ferredoxin oxidoreductase, converting photonic excitation into a charge separation, which transfers an electron from the donor P700 chlorophyll pair to the spectroscopically characterized acceptors A0, A1, FX, FA and FB in turn. This chain is Photosystem I iron-sulfur center, found in Zygnema circumcarinatum (Green alga).